A 183-amino-acid chain; its full sequence is Ferritin heavy polypeptide-like 17 (183 aa).

The 150-residue stretch at Gln-11 to Cys-160 folds into the Ferritin-like diiron domain. Glu-28, His-66, Glu-108, and Gln-142 together coordinate Fe cation.

Belongs to the ferritin family. In terms of tissue distribution, testis specific. Also expressed in several cancers.

The protein is Ferritin heavy polypeptide-like 17 (FTHL17) of Homo sapiens (Human).